We begin with the raw amino-acid sequence, 391 residues long: Thioredoxin-interacting protein (391 aa).

K212 is covalently cross-linked (Glycyl lysine isopeptide (Lys-Gly) (interchain with G-Cter in ubiquitin)). At S361 the chain carries Phosphoserine.

Belongs to the arrestin family. Homodimer; disulfide-linked. Interacts with TXN/thioredoxin through its redox-active site. Interacts with transcriptional repressors ZBTB16, ZBTB32 and HDAC1. Interacts with DDIT4. In terms of processing, ubiquitinated; undergoes heterotypic 'Lys-48'-/'Lys-63'-branched polyubiquitination catalyzed by ITCH and UBR5 resulting in proteasomal degradation. Deubiquitinated by USP5, leading to TXNIP stabilization.

It localises to the cytoplasm. May act as an oxidative stress mediator by inhibiting thioredoxin activity or by limiting its bioavailability. Interacts with COPS5 and restores COPS5-induced suppression of CDKN1B stability, blocking the COPS5-mediated translocation of CDKN1B from the nucleus to the cytoplasm. Functions as a transcriptional repressor, possibly by acting as a bridge molecule between transcription factors and corepressor complexes, and over-expression will induce G0/G1 cell cycle arrest. Required for the maturation of natural killer cells. Acts as a suppressor of tumor cell growth. Inhibits the proteasomal degradation of DDIT4, and thereby contributes to the inhibition of the mammalian target of rapamycin complex 1 (mTORC1). The sequence is that of Thioredoxin-interacting protein (TXNIP) from Pongo abelii (Sumatran orangutan).